A 52-amino-acid chain; its full sequence is Lysis protein for colicin N (52 aa).

A signal peptide spans methionine 1–alanine 17. Residue cysteine 18 is the site of N-palmitoyl cysteine attachment. Cysteine 18 carries the S-diacylglycerol cysteine lipid modification.

The protein localises to the cell outer membrane. Its function is as follows. Lysis proteins are required for both colicin release and partial cell lysis. The chain is Lysis protein for colicin N (cnl) from Escherichia coli.